A 139-amino-acid polypeptide reads, in one-letter code: Nucleoside diphosphate kinase (139 aa).

ATP is bound by residues Lys11, Phe59, Arg87, Thr93, Arg104, and Asn114. The active-site Pros-phosphohistidine intermediate is the His117.

The protein belongs to the NDK family. As to quaternary structure, homotetramer. The cofactor is Mg(2+).

Its subcellular location is the cytoplasm. It carries out the reaction a 2'-deoxyribonucleoside 5'-diphosphate + ATP = a 2'-deoxyribonucleoside 5'-triphosphate + ADP. It catalyses the reaction a ribonucleoside 5'-diphosphate + ATP = a ribonucleoside 5'-triphosphate + ADP. Functionally, major role in the synthesis of nucleoside triphosphates other than ATP. The ATP gamma phosphate is transferred to the NDP beta phosphate via a ping-pong mechanism, using a phosphorylated active-site intermediate. This Moorella thermoacetica (strain ATCC 39073 / JCM 9320) protein is Nucleoside diphosphate kinase.